Reading from the N-terminus, the 188-residue chain is ATP synthase subunit delta (188 aa).

It belongs to the ATPase delta chain family. As to quaternary structure, F-type ATPases have 2 components, F(1) - the catalytic core - and F(0) - the membrane proton channel. F(1) has five subunits: alpha(3), beta(3), gamma(1), delta(1), epsilon(1). F(0) has three main subunits: a(1), b(2) and c(10-14). The alpha and beta chains form an alternating ring which encloses part of the gamma chain. F(1) is attached to F(0) by a central stalk formed by the gamma and epsilon chains, while a peripheral stalk is formed by the delta and b chains.

Its subcellular location is the cell inner membrane. Functionally, f(1)F(0) ATP synthase produces ATP from ADP in the presence of a proton or sodium gradient. F-type ATPases consist of two structural domains, F(1) containing the extramembraneous catalytic core and F(0) containing the membrane proton channel, linked together by a central stalk and a peripheral stalk. During catalysis, ATP synthesis in the catalytic domain of F(1) is coupled via a rotary mechanism of the central stalk subunits to proton translocation. Its function is as follows. This protein is part of the stalk that links CF(0) to CF(1). It either transmits conformational changes from CF(0) to CF(1) or is implicated in proton conduction. The chain is ATP synthase subunit delta from Paracoccus denitrificans (strain Pd 1222).